The primary structure comprises 237 residues: Flagellar brake protein YcgR (237 aa).

The PilZ domain maps to 108–225; it reads QRRRQFRVTT…MERKIQSAVF (118 aa).

It belongs to the YcgR family. As to quaternary structure, monomer. Interacts with the flagellar basal bodies.

The protein localises to the bacterial flagellum basal body. Functionally, acts as a flagellar brake, regulating swimming and swarming in a bis-(3'-5') cyclic diguanylic acid (c-di-GMP)-dependent manner. Binds 1 c-di-GMP dimer per subunit. Increasing levels of c-di-GMP lead to decreased motility. This is Flagellar brake protein YcgR from Serratia proteamaculans (strain 568).